A 296-amino-acid polypeptide reads, in one-letter code: 3-methyl-2-oxobutanoate hydroxymethyltransferase (296 aa).

The disordered stretch occupies residues 1–33 (MDASDTPTHPAPHPADPAATPYGAPTTPPRPLR). The segment covering 16-25 (DPAATPYGAP) has biased composition (low complexity). 2 residues coordinate Mg(2+): Asp77 and Asp116. Residues 77–78 (DS), Asp116, and Lys146 contribute to the 3-methyl-2-oxobutanoate site. Glu148 lines the Mg(2+) pocket. Glu214 (proton acceptor) is an active-site residue.

It belongs to the PanB family. Homodecamer; pentamer of dimers. Requires Mg(2+) as cofactor.

The protein resides in the cytoplasm. The enzyme catalyses 3-methyl-2-oxobutanoate + (6R)-5,10-methylene-5,6,7,8-tetrahydrofolate + H2O = 2-dehydropantoate + (6S)-5,6,7,8-tetrahydrofolate. The protein operates within cofactor biosynthesis; (R)-pantothenate biosynthesis; (R)-pantoate from 3-methyl-2-oxobutanoate: step 1/2. Catalyzes the reversible reaction in which hydroxymethyl group from 5,10-methylenetetrahydrofolate is transferred onto alpha-ketoisovalerate to form ketopantoate. The protein is 3-methyl-2-oxobutanoate hydroxymethyltransferase of Frankia casuarinae (strain DSM 45818 / CECT 9043 / HFP020203 / CcI3).